Reading from the N-terminus, the 228-residue chain is Cytochrome c oxidase subunit 2 (228 aa).

At 1 to 26 (MATWNNLNLQNGASPLMEQIIFFHDH) the chain is on the mitochondrial intermembrane side. Residues 27-48 (TLIILIMITILVGYLMINLFFN) form a helical membrane-spanning segment. At 49–62 (KYINRFLLEGQMIE) the chain is on the mitochondrial matrix side. The helical transmembrane segment at 63–82 (LIWTILPAITLIFIALPSLR) threads the bilayer. Over 83–228 (LLYLLDELNN…FIKWINNYSS (146 aa)) the chain is Mitochondrial intermembrane. Residues His-161, Cys-196, Glu-198, Cys-200, His-204, and Met-207 each contribute to the Cu cation site. Glu-198 is a binding site for Mg(2+).

This sequence belongs to the cytochrome c oxidase subunit 2 family. Component of the cytochrome c oxidase (complex IV, CIV), a multisubunit enzyme composed of a catalytic core of 3 subunits and several supernumerary subunits. The complex exists as a monomer or a dimer and forms supercomplexes (SCs) in the inner mitochondrial membrane with ubiquinol-cytochrome c oxidoreductase (cytochrome b-c1 complex, complex III, CIII). Cu cation serves as cofactor.

The protein localises to the mitochondrion inner membrane. The catalysed reaction is 4 Fe(II)-[cytochrome c] + O2 + 8 H(+)(in) = 4 Fe(III)-[cytochrome c] + 2 H2O + 4 H(+)(out). Functionally, component of the cytochrome c oxidase, the last enzyme in the mitochondrial electron transport chain which drives oxidative phosphorylation. The respiratory chain contains 3 multisubunit complexes succinate dehydrogenase (complex II, CII), ubiquinol-cytochrome c oxidoreductase (cytochrome b-c1 complex, complex III, CIII) and cytochrome c oxidase (complex IV, CIV), that cooperate to transfer electrons derived from NADH and succinate to molecular oxygen, creating an electrochemical gradient over the inner membrane that drives transmembrane transport and the ATP synthase. Cytochrome c oxidase is the component of the respiratory chain that catalyzes the reduction of oxygen to water. Electrons originating from reduced cytochrome c in the intermembrane space (IMS) are transferred via the dinuclear copper A center (CU(A)) of subunit 2 and heme A of subunit 1 to the active site in subunit 1, a binuclear center (BNC) formed by heme A3 and copper B (CU(B)). The BNC reduces molecular oxygen to 2 water molecules using 4 electrons from cytochrome c in the IMS and 4 protons from the mitochondrial matrix. The protein is Cytochrome c oxidase subunit 2 (COII) of Yponomeuta malinellus (European small ermine moth).